Here is a 306-residue protein sequence, read N- to C-terminus: Dermonecrotic toxin LiSicTox-alphaIA1bi (306 aa).

Positions 1 to 18 (MLPYIVLVLGCWSVLSQA) are cleaved as a signal peptide. The propeptide occupies 19 to 26 (AQTDDEER). Histidine 38 is a catalytic residue. Mg(2+) contacts are provided by glutamate 58 and aspartate 60. Histidine 74 functions as the Nucleophile in the catalytic mechanism. Cystine bridges form between cysteine 78–cysteine 84 and cysteine 80–cysteine 223. Mg(2+) is bound at residue aspartate 118.

This sequence belongs to the arthropod phospholipase D family. Class II subfamily. Class IIa sub-subfamily. Requires Mg(2+) as cofactor. As to expression, expressed by the venom gland.

The protein localises to the secreted. The catalysed reaction is an N-(acyl)-sphingosylphosphocholine = an N-(acyl)-sphingosyl-1,3-cyclic phosphate + choline. The enzyme catalyses an N-(acyl)-sphingosylphosphoethanolamine = an N-(acyl)-sphingosyl-1,3-cyclic phosphate + ethanolamine. It carries out the reaction a 1-acyl-sn-glycero-3-phosphocholine = a 1-acyl-sn-glycero-2,3-cyclic phosphate + choline. It catalyses the reaction a 1-acyl-sn-glycero-3-phosphoethanolamine = a 1-acyl-sn-glycero-2,3-cyclic phosphate + ethanolamine. In terms of biological role, dermonecrotic toxins cleave the phosphodiester linkage between the phosphate and headgroup of certain phospholipids (sphingolipid and lysolipid substrates), forming an alcohol (often choline) and a cyclic phosphate. This toxin acts on sphingomyelin (SM). The level of enzymatic activity is high according to Tambourgi and colleagues or low according to Felicori and colleagues. It may also act on ceramide phosphoethanolamine (CPE), lysophosphatidylcholine (LPC) and lysophosphatidylethanolamine (LPE), but not on lysophosphatidylserine (LPS), and lysophosphatidylglycerol (LPG). It acts by transphosphatidylation, releasing exclusively cyclic phosphate products as second products. It induces complement-dependent hemolysis, dermonecrosis, vascular permeability and platelet aggregation. Both C5a and the membrane attack complex may play a role in the induction of dermonecrosis. MMP-9 and MMP-2 produced by skin fibroblasts can also contribute to proteolytic tissue destruction. The protein is Dermonecrotic toxin LiSicTox-alphaIA1bi of Loxosceles intermedia (Brown spider).